Consider the following 360-residue polypeptide: Chorismate synthase (360 aa).

Positions 48 and 54 each coordinate NADP(+). Residues 125–127 (RSS), 246–247 (NA), G286, 301–305 (KPTSS), and R327 each bind FMN.

This sequence belongs to the chorismate synthase family. Homotetramer. The cofactor is FMNH2.

The catalysed reaction is 5-O-(1-carboxyvinyl)-3-phosphoshikimate = chorismate + phosphate. Its pathway is metabolic intermediate biosynthesis; chorismate biosynthesis; chorismate from D-erythrose 4-phosphate and phosphoenolpyruvate: step 7/7. Functionally, catalyzes the anti-1,4-elimination of the C-3 phosphate and the C-6 proR hydrogen from 5-enolpyruvylshikimate-3-phosphate (EPSP) to yield chorismate, which is the branch point compound that serves as the starting substrate for the three terminal pathways of aromatic amino acid biosynthesis. This reaction introduces a second double bond into the aromatic ring system. The sequence is that of Chorismate synthase from Actinobacillus succinogenes (strain ATCC 55618 / DSM 22257 / CCUG 43843 / 130Z).